Reading from the N-terminus, the 367-residue chain is Glutamate 5-kinase (367 aa).

ATP is bound at residue K10. Substrate is bound by residues S50, D137, and N149. ATP contacts are provided by residues 169–170 and 211–217; these read TD and TGGMGTK. The PUA domain maps to 275–353; it reads AGEITVDEGA…QQIDAILGYE (79 aa).

This sequence belongs to the glutamate 5-kinase family.

It localises to the cytoplasm. It catalyses the reaction L-glutamate + ATP = L-glutamyl 5-phosphate + ADP. It functions in the pathway amino-acid biosynthesis; L-proline biosynthesis; L-glutamate 5-semialdehyde from L-glutamate: step 1/2. Its function is as follows. Catalyzes the transfer of a phosphate group to glutamate to form L-glutamate 5-phosphate. This Enterobacter sp. (strain 638) protein is Glutamate 5-kinase.